The primary structure comprises 315 residues: Replication factor C small subunit (315 aa).

Residue 43–50 (GSPGVGKT) participates in ATP binding.

This sequence belongs to the activator 1 small subunits family. RfcS subfamily. In terms of assembly, heteromultimer composed of small subunits (RfcS) and large subunits (RfcL).

In terms of biological role, part of the RFC clamp loader complex which loads the PCNA sliding clamp onto DNA. This is Replication factor C small subunit from Methanococcus maripaludis (strain DSM 14266 / JCM 13030 / NBRC 101832 / S2 / LL).